Consider the following 2729-residue polypeptide: 3-methylorcinaldehyde synthase (2729 aa).

The segment at L99–L238 is N-terminal acylcarrier protein transacylase domain (SAT). The segment covering S361–G373 has biased composition (polar residues). The interval S361 to H391 is disordered. Positions D397–Q828 constitute a Ketosynthase family 3 (KS3) domain. Residues C571, H706, and H748 each act as for beta-ketoacyl synthase activity in the active site. The segment at F942 to V1230 is malonyl-CoA:ACP transacylase (MAT) domain. Residue S1029 is the For acyl/malonyl transferase activity of the active site. The segment at E1345–D1479 is N-terminal hotdog fold. The PKS/mFAS DH domain maps to E1345–E1669. Positions K1374 to R1665 are product template (PT) domain. The active-site Proton acceptor; for dehydratase activity is the H1380. Residues D1513–E1669 form a C-terminal hotdog fold region. D1575 serves as the catalytic Proton donor; for dehydratase activity. The segment covering A1682 to A1701 has biased composition (low complexity). Residues A1682 to G1726 form a disordered region. Polar residues predominate over residues T1707–G1716. Residues Q1750 to L1824 enclose the Carrier domain. Residue S1784 is modified to O-(pantetheine 4'-phosphoryl)serine. Residues T1835–S1868 are compositionally biased toward low complexity. The disordered stretch occupies residues T1835–M1874. The segment at E2086 to T2254 is methyltransferase (C-MeT) domain. A reductase (R) domain region spans residues I2344 to R2599.

It participates in secondary metabolite biosynthesis; terpenoid biosynthesis. Functionally, non-reducing polyketide synthase; part of the gene cluster that mediates the biosynthesis of xenovulene A, an unusual meroterpenoid that has potent inhibitory effects on the human gamma-aminobutyrate A (GABAA) benzodiazepine receptor. The first step of xenovulene A biosynthesis is the biosynthesis of 3-methylorcinaldehyde performed by the non-reducing polyketide synthase aspks1. The salicylate hydroxylase asL1 then catalyzes the oxidative dearomatization of 3-methylorcinaldehyde to yield a dearomatized hydroxycyclohexadione. The 2-oxoglutarate-dependent dioxygenase asL3 further catalyzes the oxidative ring expansion to provide the first tropolone metabolite. The cytochrome P450 monooxygenase asR2 allows the synthesis of tropolone hemiacetal. In parallel, a previously unrecognised class of terpene cyclase, asR6, produces alpha-humulene from farnesylpyrophosphate (FPP). The putative Diels-Alderase asR5 probably catalyzes the formation of the tropolone-humulene skeleton by linking humulene and the polyketide moiety. Oxidative-ring contractions catalyzed by asL4 and asL6 then processively remove carbon atoms from the polyketide to yield xenovulene A. The polypeptide is 3-methylorcinaldehyde synthase (Sarocladium schorii (Acremonium strictum (strain IMI 501407))).